The chain runs to 178 residues: Nicotinamide-nucleotide adenylyltransferase (178 aa).

Belongs to the archaeal NMN adenylyltransferase family.

The protein resides in the cytoplasm. The enzyme catalyses beta-nicotinamide D-ribonucleotide + ATP + H(+) = diphosphate + NAD(+). Its pathway is cofactor biosynthesis; NAD(+) biosynthesis; NAD(+) from nicotinamide D-ribonucleotide: step 1/1. This chain is Nicotinamide-nucleotide adenylyltransferase, found in Thermoplasma volcanium (strain ATCC 51530 / DSM 4299 / JCM 9571 / NBRC 15438 / GSS1).